A 109-amino-acid polypeptide reads, in one-letter code: Large ribosomal subunit protein uL22 (109 aa).

It belongs to the universal ribosomal protein uL22 family. In terms of assembly, part of the 50S ribosomal subunit.

This protein binds specifically to 23S rRNA; its binding is stimulated by other ribosomal proteins, e.g. L4, L17, and L20. It is important during the early stages of 50S assembly. It makes multiple contacts with different domains of the 23S rRNA in the assembled 50S subunit and ribosome. Its function is as follows. The globular domain of the protein is located near the polypeptide exit tunnel on the outside of the subunit, while an extended beta-hairpin is found that lines the wall of the exit tunnel in the center of the 70S ribosome. The protein is Large ribosomal subunit protein uL22 of Leptothrix cholodnii (strain ATCC 51168 / LMG 8142 / SP-6) (Leptothrix discophora (strain SP-6)).